The sequence spans 300 residues: NAD kinase (300 aa).

Aspartate 77 acts as the Proton acceptor in catalysis. Residues 77 to 78 (DG), 151 to 152 (ND), histidine 162, arginine 179, aspartate 181, and 192 to 197 (TAYSLS) each bind NAD(+).

This sequence belongs to the NAD kinase family. The cofactor is a divalent metal cation.

The protein localises to the cytoplasm. The catalysed reaction is NAD(+) + ATP = ADP + NADP(+) + H(+). In terms of biological role, involved in the regulation of the intracellular balance of NAD and NADP, and is a key enzyme in the biosynthesis of NADP. Catalyzes specifically the phosphorylation on 2'-hydroxyl of the adenosine moiety of NAD to yield NADP. The polypeptide is NAD kinase (Cellvibrio japonicus (strain Ueda107) (Pseudomonas fluorescens subsp. cellulosa)).